Consider the following 344-residue polypeptide: MEAARPFAREWRAQSLPLAVGGVLKLRLCELWLLLLGSSLNARFLPDEEDVDFINEYVNLHNELRGDVIPRGSNLRFMTWDVALSRTARAWGKKCLFTHNIYLQDVQMVHPKFYGIGENMWVGPENEFTASIAIRSWHAEKKMYNFENGSCSGDCSNYIQLVWDHSYKVGCAVTPCSKIGHIIHAAIFICNYAPGGTLTRRPYEPGIFCTRCGRRDKCTDFLCSNADRDQATYYRFWYPKWEMPRPVVCDPLCTFILLLRILCFILCVITVLIVQSQFPNILLEQQMIFTPEESEAGNEEEEKEEEKKEKEEMEMEIMEMEEEKEEREEEEEETQKEKMEEEEK.

In terms of domain architecture, SCP spans 58–192 (VNLHNELRGD…IHAAIFICNY (135 aa)). The chain crosses the membrane as a helical span at residues 254 to 274 (TFILLLRILCFILCVITVLIV). 2 stretches are compositionally biased toward acidic residues: residues 292 to 304 (EESEAGNEEEEKE) and 312 to 334 (EMEMEIMEMEEEKEEREEEEEET). A disordered region spans residues 292–344 (EESEAGNEEEEKEEEKKEKEEMEMEIMEMEEEKEEREEEEEETQKEKMEEEEK). A compositionally biased stretch (basic and acidic residues) spans 335–344 (QKEKMEEEEK).

Belongs to the CRISP family. As to expression, highly expressed in testis. Detected in prostate, kidney, bladder, lung and bone marrow.

Its subcellular location is the membrane. This is GLIPR1-like protein 2 (GLIPR1L2) from Homo sapiens (Human).